A 444-amino-acid polypeptide reads, in one-letter code: Deoxyguanosinetriphosphate triphosphohydrolase-like protein (444 aa).

Residues 1–26 are disordered; the sequence is MIASPWHERRLNEDKKRRNDHRSPFQ. One can recognise an HD domain in the interval 59–250; the sequence is RLTHSLEVSQ…MELADDIAYA (192 aa).

The protein belongs to the dGTPase family. Type 2 subfamily.

This is Deoxyguanosinetriphosphate triphosphohydrolase-like protein from Shewanella woodyi (strain ATCC 51908 / MS32).